We begin with the raw amino-acid sequence, 302 residues long: Sulfate adenylyltransferase subunit 2 (302 aa).

This sequence belongs to the PAPS reductase family. CysD subfamily. Heterodimer composed of CysD, the smaller subunit, and CysN.

It catalyses the reaction sulfate + ATP + H(+) = adenosine 5'-phosphosulfate + diphosphate. It participates in sulfur metabolism; hydrogen sulfide biosynthesis; sulfite from sulfate: step 1/3. Functionally, with CysN forms the ATP sulfurylase (ATPS) that catalyzes the adenylation of sulfate producing adenosine 5'-phosphosulfate (APS) and diphosphate, the first enzymatic step in sulfur assimilation pathway. APS synthesis involves the formation of a high-energy phosphoric-sulfuric acid anhydride bond driven by GTP hydrolysis by CysN coupled to ATP hydrolysis by CysD. This Photorhabdus laumondii subsp. laumondii (strain DSM 15139 / CIP 105565 / TT01) (Photorhabdus luminescens subsp. laumondii) protein is Sulfate adenylyltransferase subunit 2.